A 250-amino-acid polypeptide reads, in one-letter code: Diaminopimelate epimerase (250 aa).

2 residues coordinate substrate: Asn-11 and Asn-60. Residue Cys-69 is the Proton donor of the active site. Substrate-binding positions include 70–71 (GN), Asn-164, and 182–183 (ER). Cys-192 functions as the Proton acceptor in the catalytic mechanism. 193–194 (GT) serves as a coordination point for substrate.

Belongs to the diaminopimelate epimerase family. In terms of assembly, homodimer.

It is found in the cytoplasm. It carries out the reaction (2S,6S)-2,6-diaminopimelate = meso-2,6-diaminopimelate. Its pathway is amino-acid biosynthesis; L-lysine biosynthesis via DAP pathway; DL-2,6-diaminopimelate from LL-2,6-diaminopimelate: step 1/1. In terms of biological role, catalyzes the stereoinversion of LL-2,6-diaminopimelate (L,L-DAP) to meso-diaminopimelate (meso-DAP), a precursor of L-lysine and an essential component of the bacterial peptidoglycan. The sequence is that of Diaminopimelate epimerase from Nitratiruptor sp. (strain SB155-2).